The sequence spans 334 residues: 6-phosphogluconolactonase (334 aa).

It belongs to the cycloisomerase 2 family.

The enzyme catalyses 6-phospho-D-glucono-1,5-lactone + H2O = 6-phospho-D-gluconate + H(+). The protein operates within carbohydrate degradation; pentose phosphate pathway; D-ribulose 5-phosphate from D-glucose 6-phosphate (oxidative stage): step 2/3. Its function is as follows. Catalyzes the hydrolysis of 6-phosphogluconolactone to 6-phosphogluconate. The protein is 6-phosphogluconolactonase of Buchnera aphidicola subsp. Acyrthosiphon pisum (strain APS) (Acyrthosiphon pisum symbiotic bacterium).